A 343-amino-acid polypeptide reads, in one-letter code: tRNA N6-adenosine threonylcarbamoyltransferase (343 aa).

His116 and His120 together coordinate Fe cation. Substrate-binding positions include 138–142, Asp172, Gly185, Asp189, and Asn277; that span reads LVSGG. Asp305 lines the Fe cation pocket.

It belongs to the KAE1 / TsaD family. Fe(2+) serves as cofactor.

The protein localises to the cytoplasm. It catalyses the reaction L-threonylcarbamoyladenylate + adenosine(37) in tRNA = N(6)-L-threonylcarbamoyladenosine(37) in tRNA + AMP + H(+). In terms of biological role, required for the formation of a threonylcarbamoyl group on adenosine at position 37 (t(6)A37) in tRNAs that read codons beginning with adenine. Is involved in the transfer of the threonylcarbamoyl moiety of threonylcarbamoyl-AMP (TC-AMP) to the N6 group of A37, together with TsaE and TsaB. TsaD likely plays a direct catalytic role in this reaction. This Mycobacterium ulcerans (strain Agy99) protein is tRNA N6-adenosine threonylcarbamoyltransferase.